The sequence spans 52 residues: uncharacterized protein (52 aa).

This is an uncharacterized protein from Bacillus subtilis (strain 168).